A 233-amino-acid chain; its full sequence is uncharacterized protein (233 aa).

The signal sequence occupies residues 1–23 (MEIKYFLVLLVGFLLVLPSIVNP). Residues 42-217 (LDVNNPHNPN…HHHHQEASEC (176 aa)) are disordered. The span at 45 to 64 (NNPHNPNNNPHNPHNPNNNP) shows a compositional bias: low complexity. Positions 65-211 (HHPHHLHHHH…HPHPHHHHHH (147 aa)) are enriched in basic residues.

The protein localises to the secreted. This is an uncharacterized protein from Dictyostelium discoideum (Social amoeba).